We begin with the raw amino-acid sequence, 1179 residues long: MIWCLRLTVLSLIISQGADGRRKPEVVSVVGRAGESAVLGCDLLPPAGHPPLHVIEWLRFGFLLPIFIQFGLYSPRIDPDYVGRVRLQTGASLQIEGLRVEDQGWYECRVLFLDQHSPEQDFANGSWVHLTVNSPPQFQETPPLVLEVKELEAVTLRCVARGSPQPYVTWKFRGQDLGKGQGQVQVQNGTLWIRRVERGSAGDYTCQASSSEGSITHATQLLVLGPPVIVVPPSNSTVNSSQDVSLACRAEAYPANLTYSWFQDGVNVFHISRLQSRVRILVDGSLWLQATQPDDAGHYTCVPSNGFLHPPSASAYLTVLYPAQVTVMPPETPLPTGMRGVIRCPVRANPPLLFVTWTKDGQALQLDKFPGWSLGPEGSLIIALGNENALGEYSCTPYNSLGTAGPSPVTQVLLKAPPAFIDQPKEEYFQEVGRELLIPCSARGDPPPIVSWAKVGRGLQGQAQVDSNNSLVLRPLTKEAQGRWECSASNAVARVTTSTNVYVLGTSPHVVTNVSVVPLPKGANVSWEPGFDGGYLQRFSVWYTPLAKRPDRAHHDWVSLAVPIGATHLLVPGLQAHAQYQFSVLAQNKLGSGPFSEIVLSIPEGLPTTPAAPGLPPTEIPPPLSPPRGLVAVRTPRGVLLHWDPPELIPGRLDGYILEGRQGSQGWEILDQGVAGTEIQLLVPGLIKDVLYEFRLVAFADSYVSDPSNVANISTSGLEVYPSRTQLPGLLPQPVLAGVVGGVCFLGVAVLVSILAACLMNRRRAARRHRKRLRQDPPLIFSPRGKSGSHSAPGSGSPDSVTKFKLQGSPVPSLRQSLLWGEPARPPSPHPDSPLGRGPLPLEPICRGPDGRFVMGPTVAPSQEKLCLERSEPRTSAKRLAQSFDCSSSSPSGVPQPLCITDISPVGQPLAAVPSPLPGPGPLLQYLSLPFFREMNVDGDWPPLEEPTPAPPPDFMDSQPCPTSSFLPPPDSPPANLRAVLPGTLMGVGVSSEPPYTALADWTLRERVLPGLLSAAPRGSLTSQSSGRGSASFLRPPSTAPSAGGSYLSPAPGDTSSWASGPERWPRREHVVTVSKRRNTSVDENYEWDSEFPGDMELLETWHPGLASSRTHPELEPELGVKTPEESCLLNPTHAAGPEARCAALREEFLAFRRRRDATRARLPAYQQSISYPEQATLL.

The N-terminal stretch at 1–20 is a signal peptide; the sequence is MIWCLRLTVLSLIISQGADG. Residues 21-734 lie on the Extracellular side of the membrane; sequence RRKPEVVSVV…TQLPGLLPQP (714 aa). Ig-like domains are found at residues 24–124, 136–216, 226–318, 322–410, and 418–502; these read PEVV…DFAN, PQFQ…GSIT, PPVI…AYLT, PAQV…SPVT, and PAFI…TNVY. 2 cysteine pairs are disulfide-bonded: Cys-41–Cys-108 and Cys-158–Cys-206. N-linked (GlcNAc...) asparagine glycosylation is found at Asn-188, Asn-239, and Asn-256. Disulfide bonds link Cys-248/Cys-301, Cys-344/Cys-395, and Cys-440/Cys-486. 2 Fibronectin type-III domains span residues 507–611 and 623–718; these read SPHV…TTPA and PLSP…TSGL. N-linked (GlcNAc...) asparagine glycosylation is found at Asn-513 and Asn-524. The chain crosses the membrane as a helical span at residues 735–755; the sequence is VLAGVVGGVCFLGVAVLVSIL. The Cytoplasmic segment spans residues 756-1179; it reads AACLMNRRRA…ISYPEQATLL (424 aa). The tract at residues 767 to 807 is disordered; sequence RRHRKRLRQDPPLIFSPRGKSGSHSAPGSGSPDSVTKFKLQ. Positions 785-800 are enriched in low complexity; sequence GKSGSHSAPGSGSPDS. Ser-809 is subject to Phosphoserine. Disordered stretches follow at residues 819–842, 942–974, and 1016–1079; these read LWGE…PLPL, PPLE…DSPP, and APRG…KRRN. Residues 944–954 show a composition bias toward pro residues; that stretch reads LEEPTPAPPPD. Positions 1020 to 1029 are enriched in polar residues; it reads SLTSQSSGRG. Residues 1177 to 1179 carry the PDZ-binding motif; sequence TLL.

This sequence belongs to the immunoglobulin superfamily. Turtle family. As to quaternary structure, interacts with MAGI2 and SHANK1. Expressed in both cell bodies and dendrites of cortical and hippocampal neurons and also cerebellar Purkinje cells (at protein level).

The protein localises to the cell membrane. Its subcellular location is the synapse. Functions in dendrite outgrowth and synapse maturation. The chain is Protein turtle homolog A (Igsf9) from Mus musculus (Mouse).